The following is a 213-amino-acid chain: MIKLFVGLGNPGPDYDATRHNAGFWWIDGLARDLKVHLVPERAYHGLVARANVNGQSVWLLQPQTFMNLSGKSVAALARFFKIQPQEILVAHDELDILPGQAKLKRGGSHAGHNGLRDIHAQLGSPDYWRLRIGIGHPGVKAEVANWVLKKPSPDHRTLIEDSIAHSLKAAPAMLAGDMDKATLLVHTTKPPRPKPPRPAAAPVDAPAAPGDQ.

Tyr15 serves as a coordination point for tRNA. The active-site Proton acceptor is the His20. 3 residues coordinate tRNA: Phe66, Asn68, and Asn114. The segment at 187 to 213 (HTTKPPRPKPPRPAAAPVDAPAAPGDQ) is disordered. A compositionally biased stretch (low complexity) spans 201-213 (AAPVDAPAAPGDQ).

Belongs to the PTH family. In terms of assembly, monomer.

It localises to the cytoplasm. The enzyme catalyses an N-acyl-L-alpha-aminoacyl-tRNA + H2O = an N-acyl-L-amino acid + a tRNA + H(+). In terms of biological role, hydrolyzes ribosome-free peptidyl-tRNAs (with 1 or more amino acids incorporated), which drop off the ribosome during protein synthesis, or as a result of ribosome stalling. Its function is as follows. Catalyzes the release of premature peptidyl moieties from peptidyl-tRNA molecules trapped in stalled 50S ribosomal subunits, and thus maintains levels of free tRNAs and 50S ribosomes. In Paracidovorax citrulli (strain AAC00-1) (Acidovorax citrulli), this protein is Peptidyl-tRNA hydrolase.